The following is a 352-amino-acid chain: Photosystem II D2 protein (352 aa).

A helical membrane pass occupies residues 40-60 (CAYLALGGWLTGTSFVTSWYT). His-117 is a chlorophyll a binding site. Residues 124–140 (GFMLRQFEIARLVGVRP) traverse the membrane as a helical segment. Gln-129 and Asn-142 together coordinate pheophytin a. A helical transmembrane segment spans residues 152 to 165 (VFVSVFLMYPLGQS). Position 197 (His-197) interacts with chlorophyll a. Residues 207–227 (GALLCAIHGATVENTLFEDSE) traverse the membrane as a helical segment. A plastoquinone is bound by residues His-214 and Phe-261. His-214 serves as a coordination point for Fe cation. Residue His-268 coordinates Fe cation. Residues 278-294 (GLWMSSIGIVGLALNLR) form a helical membrane-spanning segment.

The protein belongs to the reaction center PufL/M/PsbA/D family. PSII is composed of 1 copy each of membrane proteins PsbA, PsbB, PsbC, PsbD, PsbE, PsbF, PsbH, PsbI, PsbJ, PsbK, PsbL, PsbM, PsbT, PsbX, PsbY, PsbZ, Psb30/Ycf12, peripheral proteins PsbO, CyanoQ (PsbQ), PsbU, PsbV and a large number of cofactors. It forms dimeric complexes. The D1/D2 heterodimer binds P680, chlorophylls that are the primary electron donor of PSII, and subsequent electron acceptors. It shares a non-heme iron and each subunit binds pheophytin, quinone, additional chlorophylls, carotenoids and lipids. There is also a Cl(-1) ion associated with D1 and D2, which is required for oxygen evolution. The PSII complex binds additional chlorophylls, carotenoids and specific lipids. serves as cofactor.

Its subcellular location is the cellular thylakoid membrane. It carries out the reaction 2 a plastoquinone + 4 hnu + 2 H2O = 2 a plastoquinol + O2. Functionally, photosystem II (PSII) is a light-driven water:plastoquinone oxidoreductase that uses light energy to abstract electrons from H(2)O, generating O(2) and a proton gradient subsequently used for ATP formation. It consists of a core antenna complex that captures photons, and an electron transfer chain that converts photonic excitation into a charge separation. The D1/D2 (PsbA/PsbD) reaction center heterodimer binds P680, the primary electron donor of PSII as well as several subsequent electron acceptors. D2 is needed for assembly of a stable PSII complex. In Synechococcus elongatus (strain ATCC 33912 / PCC 7942 / FACHB-805) (Anacystis nidulans R2), this protein is Photosystem II D2 protein.